A 178-amino-acid chain; its full sequence is Nucleoside-triphosphatase THEP1 (178 aa).

Residues 9 to 16 and 101 to 108 each bind ATP; these read GPVGSIKA and VIIIDEVG.

This sequence belongs to the THEP1 NTPase family.

It carries out the reaction a ribonucleoside 5'-triphosphate + H2O = a ribonucleoside 5'-diphosphate + phosphate + H(+). Functionally, has nucleotide phosphatase activity towards ATP, GTP, CTP, TTP and UTP. May hydrolyze nucleoside diphosphates with lower efficiency. This chain is Nucleoside-triphosphatase THEP1, found in Thermoplasma volcanium (strain ATCC 51530 / DSM 4299 / JCM 9571 / NBRC 15438 / GSS1).